Reading from the N-terminus, the 435-residue chain is Probable long-chain-alcohol O-fatty-acyltransferase 11 (435 aa).

Helical transmembrane passes span 7–27 (NLIK…YVPT), 36–56 (FLSV…FASV), 59–79 (SGYT…LFSF), 120–140 (PIEV…SVVL), 149–169 (IYPI…LEIL), 200–220 (DFWG…DVYA), 238–258 (LGVF…FFYI), 263–283 (PTGE…AYDA), 300–320 (CLIL…WLFF), 363–383 (FFTG…IGFV), and 406–426 (FFIG…IGFV).

This sequence belongs to the wax synthase family.

The protein localises to the membrane. It carries out the reaction a long chain fatty alcohol + a fatty acyl-CoA = a wax ester + CoA. Its function is as follows. Catalyzes the final step in the synthesis of long-chain linear esters (waxes). In Arabidopsis thaliana (Mouse-ear cress), this protein is Probable long-chain-alcohol O-fatty-acyltransferase 11.